A 483-amino-acid polypeptide reads, in one-letter code: Regulatory protein ViaA (483 aa).

This sequence belongs to the ViaA family. As to quaternary structure, homodimer. Interacts with RavA.

The protein localises to the cytoplasm. Its function is as follows. Component of the RavA-ViaA chaperone complex, which may act on the membrane to optimize the function of some of the respiratory chains. ViaA stimulates the ATPase activity of RavA. The polypeptide is Regulatory protein ViaA (Escherichia coli (strain 55989 / EAEC)).